A 322-amino-acid chain; its full sequence is Ferredoxin--NADP reductase (322 aa).

FAD-binding residues include Asp33, Gln41, Tyr46, Ala86, Phe120, Asp278, and Ser319.

Belongs to the ferredoxin--NADP reductase type 2 family. Homodimer. The cofactor is FAD.

The enzyme catalyses 2 reduced [2Fe-2S]-[ferredoxin] + NADP(+) + H(+) = 2 oxidized [2Fe-2S]-[ferredoxin] + NADPH. This chain is Ferredoxin--NADP reductase, found in Salinispora tropica (strain ATCC BAA-916 / DSM 44818 / JCM 13857 / NBRC 105044 / CNB-440).